We begin with the raw amino-acid sequence, 135 residues long: Fatty acid-binding protein homolog 6 (135 aa).

Residues Arg110 and 130–132 each bind a fatty acid; that span reads REY.

Belongs to the calycin superfamily. Fatty-acid binding protein (FABP) family.

The protein is Fatty acid-binding protein homolog 6 (lbp-6) of Caenorhabditis elegans.